We begin with the raw amino-acid sequence, 198 residues long: Glycerol-3-phosphate acyltransferase 3 (198 aa).

Helical transmembrane passes span 4–24 (TYLL…LVVG), 71–91 (LPMV…AVLG), 113–133 (LLCY…TLLF), and 147–167 (VVAV…AMCL).

It belongs to the PlsY family. In terms of assembly, probably interacts with PlsX.

The protein resides in the cell membrane. The catalysed reaction is an acyl phosphate + sn-glycerol 3-phosphate = a 1-acyl-sn-glycero-3-phosphate + phosphate. It functions in the pathway lipid metabolism; phospholipid metabolism. Functionally, catalyzes the transfer of an acyl group from acyl-phosphate (acyl-PO(4)) to glycerol-3-phosphate (G3P) to form lysophosphatidic acid (LPA). This enzyme utilizes acyl-phosphate as fatty acyl donor, but not acyl-CoA or acyl-ACP. This chain is Glycerol-3-phosphate acyltransferase 3, found in Bacillus anthracis.